Reading from the N-terminus, the 450-residue chain is Tubulin alpha-3 chain (450 aa).

Gln11 is a binding site for GTP. Residue Lys40 is modified to N6-acetyllysine. Residues Glu71, Gly144, Thr145, Thr179, Asn206, and Asn228 each coordinate GTP. Glu71 is a binding site for Mg(2+). The active site involves Glu254.

It belongs to the tubulin family. In terms of assembly, dimer of alpha and beta chains. A typical microtubule is a hollow water-filled tube with an outer diameter of 25 nm and an inner diameter of 15 nM. Alpha-beta heterodimers associate head-to-tail to form protofilaments running lengthwise along the microtubule wall with the beta-tubulin subunit facing the microtubule plus end conferring a structural polarity. Microtubules usually have 13 protofilaments but different protofilament numbers can be found in some organisms and specialized cells. Mg(2+) serves as cofactor. Post-translationally, undergoes a tyrosination/detyrosination cycle, the cyclic removal and re-addition of a C-terminal tyrosine residue by the enzymes tubulin tyrosine carboxypeptidase (TTCP) and tubulin tyrosine ligase (TTL), respectively. In terms of processing, acetylation of alpha chains at Lys-40 stabilizes microtubules and affects affinity and processivity of microtubule motors. This modification has a role in multiple cellular functions, ranging from cell motility, cell cycle progression or cell differentiation to intracellular trafficking and signaling.

It is found in the cytoplasm. Its subcellular location is the cytoskeleton. The catalysed reaction is GTP + H2O = GDP + phosphate + H(+). Functionally, tubulin is the major constituent of microtubules, a cylinder consisting of laterally associated linear protofilaments composed of alpha- and beta-tubulin heterodimers. Microtubules grow by the addition of GTP-tubulin dimers to the microtubule end, where a stabilizing cap forms. Below the cap, tubulin dimers are in GDP-bound state, owing to GTPase activity of alpha-tubulin. The chain is Tubulin alpha-3 chain (TUBA3) from Zea mays (Maize).